We begin with the raw amino-acid sequence, 244 residues long: Phosphoadenosine 5'-phosphosulfate reductase (244 aa).

C239 acts as the Nucleophile; cysteine thiosulfonate intermediate in catalysis.

The protein belongs to the PAPS reductase family. CysH subfamily.

The protein resides in the cytoplasm. The enzyme catalyses [thioredoxin]-disulfide + sulfite + adenosine 3',5'-bisphosphate + 2 H(+) = [thioredoxin]-dithiol + 3'-phosphoadenylyl sulfate. The protein operates within sulfur metabolism; hydrogen sulfide biosynthesis; sulfite from sulfate: step 3/3. In terms of biological role, catalyzes the formation of sulfite from phosphoadenosine 5'-phosphosulfate (PAPS) using thioredoxin as an electron donor. The protein is Phosphoadenosine 5'-phosphosulfate reductase of Salmonella agona (strain SL483).